The chain runs to 92 residues: Probable Fe(2+)-trafficking protein (92 aa).

Belongs to the Fe(2+)-trafficking protein family.

Could be a mediator in iron transactions between iron acquisition and iron-requiring processes, such as synthesis and/or repair of Fe-S clusters in biosynthetic enzymes. The chain is Probable Fe(2+)-trafficking protein from Shewanella woodyi (strain ATCC 51908 / MS32).